Reading from the N-terminus, the 202-residue chain is LexA repressor (202 aa).

A DNA-binding region (H-T-H motif) is located at residues Arg-27–Arg-47. Active-site for autocatalytic cleavage activity residues include Ser-119 and Lys-156.

The protein belongs to the peptidase S24 family. Homodimer.

The catalysed reaction is Hydrolysis of Ala-|-Gly bond in repressor LexA.. Represses a number of genes involved in the response to DNA damage (SOS response), including recA and lexA. In the presence of single-stranded DNA, RecA interacts with LexA causing an autocatalytic cleavage which disrupts the DNA-binding part of LexA, leading to derepression of the SOS regulon and eventually DNA repair. The protein is LexA repressor of Marinobacter nauticus (strain ATCC 700491 / DSM 11845 / VT8) (Marinobacter aquaeolei).